Consider the following 388-residue polypeptide: Chalcone synthase DIV (388 aa).

The active site involves cysteine 164.

This sequence belongs to the thiolase-like superfamily. Chalcone/stilbene synthases family.

It carries out the reaction (E)-4-coumaroyl-CoA + 3 malonyl-CoA + 3 H(+) = 2',4,4',6'-tetrahydroxychalcone + 3 CO2 + 4 CoA. It functions in the pathway secondary metabolite biosynthesis; flavonoid biosynthesis. The primary product of this enzyme is 4,2',4',6'-tetrahydroxychalcone (also termed naringenin-chalcone or chalcone) which can under specific conditions spontaneously isomerize into naringenin. This is Chalcone synthase DIV (CHS-DIV) from Ipomoea batatas (Sweet potato).